We begin with the raw amino-acid sequence, 77 residues long: RNA-binding protein Hfq (77 aa).

The 61-residue stretch at 10–70 (DAFLNHVRKT…ISTVMPAQPI (61 aa)) folds into the Sm domain.

It belongs to the Hfq family. In terms of assembly, homohexamer.

Functionally, RNA chaperone that binds small regulatory RNA (sRNAs) and mRNAs to facilitate mRNA translational regulation in response to envelope stress, environmental stress and changes in metabolite concentrations. Also binds with high specificity to tRNAs. This Jannaschia sp. (strain CCS1) protein is RNA-binding protein Hfq.